The following is a 618-amino-acid chain: Dihydroxy-acid dehydratase (618 aa).

Aspartate 81 serves as a coordination point for Mg(2+). Cysteine 122 lines the [2Fe-2S] cluster pocket. Positions 123 and 124 each coordinate Mg(2+). Position 124 is an N6-carboxylysine (lysine 124). Cysteine 195 lines the [2Fe-2S] cluster pocket. Glutamate 491 lines the Mg(2+) pocket. Catalysis depends on serine 517, which acts as the Proton acceptor.

The protein belongs to the IlvD/Edd family. Homodimer. It depends on [2Fe-2S] cluster as a cofactor. Requires Mg(2+) as cofactor.

It catalyses the reaction (2R)-2,3-dihydroxy-3-methylbutanoate = 3-methyl-2-oxobutanoate + H2O. The enzyme catalyses (2R,3R)-2,3-dihydroxy-3-methylpentanoate = (S)-3-methyl-2-oxopentanoate + H2O. It functions in the pathway amino-acid biosynthesis; L-isoleucine biosynthesis; L-isoleucine from 2-oxobutanoate: step 3/4. The protein operates within amino-acid biosynthesis; L-valine biosynthesis; L-valine from pyruvate: step 3/4. Functionally, functions in the biosynthesis of branched-chain amino acids. Catalyzes the dehydration of (2R,3R)-2,3-dihydroxy-3-methylpentanoate (2,3-dihydroxy-3-methylvalerate) into 2-oxo-3-methylpentanoate (2-oxo-3-methylvalerate) and of (2R)-2,3-dihydroxy-3-methylbutanoate (2,3-dihydroxyisovalerate) into 2-oxo-3-methylbutanoate (2-oxoisovalerate), the penultimate precursor to L-isoleucine and L-valine, respectively. The sequence is that of Dihydroxy-acid dehydratase from Rhodopseudomonas palustris (strain ATCC BAA-98 / CGA009).